Consider the following 252-residue polypeptide: Flavin-dependent thymidylate synthase (252 aa).

The ThyX domain occupies 7–235 (LDVQLVACST…PTVFSDFETS (229 aa)). DUMP contacts are provided by residues 94-97 (ELVR), 105-109 (QLSQR), and Arg-174. Residues 97 to 99 (RHR) and Gln-105 contribute to the FAD site. The ThyX motif signature appears at 97 to 107 (RHRHFSFSQLS). Residues 190–192 (NFR) and His-196 contribute to the FAD site. Arg-201 is a binding site for dUMP. Arg-201 (involved in ionization of N3 of dUMP, leading to its activation) is an active-site residue.

This sequence belongs to the thymidylate synthase ThyX family. As to quaternary structure, homotetramer. FAD serves as cofactor.

The catalysed reaction is dUMP + (6R)-5,10-methylene-5,6,7,8-tetrahydrofolate + NADPH + H(+) = dTMP + (6S)-5,6,7,8-tetrahydrofolate + NADP(+). It participates in pyrimidine metabolism; dTTP biosynthesis. Its function is as follows. Catalyzes the reductive methylation of 2'-deoxyuridine-5'-monophosphate (dUMP) to 2'-deoxythymidine-5'-monophosphate (dTMP) while utilizing 5,10-methylenetetrahydrofolate (mTHF) as the methyl donor, and NADPH and FADH(2) as the reductant. This Corynebacterium diphtheriae (strain ATCC 700971 / NCTC 13129 / Biotype gravis) protein is Flavin-dependent thymidylate synthase.